Here is a 169-residue protein sequence, read N- to C-terminus: Large ribosomal subunit protein uL10 (169 aa).

It belongs to the universal ribosomal protein uL10 family. As to quaternary structure, part of the ribosomal stalk of the 50S ribosomal subunit. The N-terminus interacts with L11 and the large rRNA to form the base of the stalk. The C-terminus forms an elongated spine to which L12 dimers bind in a sequential fashion forming a multimeric L10(L12)X complex.

Forms part of the ribosomal stalk, playing a central role in the interaction of the ribosome with GTP-bound translation factors. This Rickettsia felis (strain ATCC VR-1525 / URRWXCal2) (Rickettsia azadi) protein is Large ribosomal subunit protein uL10.